The primary structure comprises 993 residues: Mediator of RNA polymerase II transcription subunit 24 (993 aa).

Residues Ser827 and Ser829 each carry the phosphoserine modification.

The protein belongs to the Mediator complex subunit 24 family. Component of the Mediator complex, which includes at least CDK8, MED4, MED6, MED11, MED14, MED17, MED18, MED20, MED21, MED22, MED27, MED28, MED30 and MED31.

The protein resides in the nucleus. Functionally, component of the Mediator complex, a coactivator involved in the regulated transcription of nearly all RNA polymerase II-dependent genes. Mediator functions as a bridge to convey information from gene-specific regulatory proteins to the basal RNA polymerase II transcription machinery. Mediator is recruited to promoters by direct interactions with regulatory proteins and serves as a scaffold for the assembly of a functional preinitiation complex with RNA polymerase II and the general transcription factors. Required for activated transcription of the MtnA, MtnB and MtnD genes. The sequence is that of Mediator of RNA polymerase II transcription subunit 24 (MED24) from Drosophila melanogaster (Fruit fly).